Reading from the N-terminus, the 69-residue chain is Brevinin-1CG5 (69 aa).

An N-terminal signal peptide occupies residues 1-22 (MFTLKKSLLLLFFLGTINLSLC). A propeptide spans 23–43 (EQERNAEEERRDDDEMDVEVE) (removed in mature form). C63 and C69 are oxidised to a cystine.

Belongs to the frog skin active peptide (FSAP) family. Brevinin subfamily. Expressed by the skin glands.

It localises to the secreted. In terms of biological role, antimicrobial peptide active against a variety of Gram-positive and Gram-negative bacterial strains. Has antifungal activity against C.albicans ATCC 10231 and a slime mold isolate. Has hemolytic activity against human erythrocytes. This Amolops chunganensis (Chungan torrent frog) protein is Brevinin-1CG5.